Here is a 459-residue protein sequence, read N- to C-terminus: ATP-dependent protease ATPase subunit HslU (459 aa).

Residues Val-26, 68–73 (GVGKTE), Asp-271, Glu-337, and Arg-409 contribute to the ATP site.

The protein belongs to the ClpX chaperone family. HslU subfamily. As to quaternary structure, a double ring-shaped homohexamer of HslV is capped on each side by a ring-shaped HslU homohexamer. The assembly of the HslU/HslV complex is dependent on binding of ATP.

The protein resides in the cytoplasm. Its function is as follows. ATPase subunit of a proteasome-like degradation complex; this subunit has chaperone activity. The binding of ATP and its subsequent hydrolysis by HslU are essential for unfolding of protein substrates subsequently hydrolyzed by HslV. HslU recognizes the N-terminal part of its protein substrates and unfolds these before they are guided to HslV for hydrolysis. This chain is ATP-dependent protease ATPase subunit HslU, found in Xylella fastidiosa (strain M23).